The primary structure comprises 614 residues: Beta-glucosidase 33 (614 aa).

The N-terminal stretch at 1–26 (MATATLTLFLGLLALTSTILSFNADA) is a signal peptide. Residues Gln-113, His-217, and 262 to 263 (NE) contribute to the a beta-D-glucoside site. Catalysis depends on Glu-263, which acts as the Proton donor. Cys-282 and Cys-290 are oxidised to a cystine. A glycan (N-linked (GlcNAc...) asparagine) is linked at Asn-344. Tyr-407 contacts a beta-D-glucoside. Asn-419, Asn-432, and Asn-439 each carry an N-linked (GlcNAc...) asparagine glycan. Glu-479 provides a ligand contact to a beta-D-glucoside. Glu-479 functions as the Nucleophile in the catalytic mechanism. An N-linked (GlcNAc...) asparagine glycan is attached at Asn-491. A beta-D-glucoside-binding positions include Trp-529, 536–537 (EW), and Phe-545.

It belongs to the glycosyl hydrolase 1 family.

The catalysed reaction is Hydrolysis of terminal, non-reducing beta-D-glucosyl residues with release of beta-D-glucose.. This Arabidopsis thaliana (Mouse-ear cress) protein is Beta-glucosidase 33.